A 91-amino-acid chain; its full sequence is Small ribosomal subunit protein uS19 (91 aa).

The protein belongs to the universal ribosomal protein uS19 family.

Functionally, protein S19 forms a complex with S13 that binds strongly to the 16S ribosomal RNA. The chain is Small ribosomal subunit protein uS19 from Azotobacter vinelandii (strain DJ / ATCC BAA-1303).